A 260-amino-acid chain; its full sequence is 3'-5' ssDNA/RNA exonuclease TatD (260 aa).

3 residues coordinate a divalent metal cation: glutamate 91, histidine 127, and histidine 152.

This sequence belongs to the metallo-dependent hydrolases superfamily. TatD-type hydrolase family. TatD subfamily. As to quaternary structure, monomer. Mg(2+) serves as cofactor.

The protein resides in the cytoplasm. In terms of biological role, 3'-5' exonuclease that prefers single-stranded DNA and RNA. May play a role in the H(2)O(2)-induced DNA damage repair. This Enterobacter lignolyticus (strain SCF1) protein is 3'-5' ssDNA/RNA exonuclease TatD.